Consider the following 35-residue polypeptide: Coenzyme PQQ synthesis protein A (35 aa).

The segment at residues 16–20 (EINMY) is a cross-link (pyrroloquinoline quinone (Glu-Tyr)).

It belongs to the PqqA family.

It functions in the pathway cofactor biosynthesis; pyrroloquinoline quinone biosynthesis. In terms of biological role, required for coenzyme pyrroloquinoline quinone (PQQ) biosynthesis. PQQ is probably formed by cross-linking a specific glutamate to a specific tyrosine residue and excising these residues from the peptide. This Ruegeria pomeroyi (strain ATCC 700808 / DSM 15171 / DSS-3) (Silicibacter pomeroyi) protein is Coenzyme PQQ synthesis protein A.